We begin with the raw amino-acid sequence, 312 residues long: tRNA dimethylallyltransferase (312 aa).

11–18 lines the ATP pocket; that stretch reads GPTAVGKT. A substrate-binding site is contributed by 13 to 18; it reads TAVGKT. Residues 159-163 form an interaction with substrate tRNA region; it reads QRVLR.

Belongs to the IPP transferase family. As to quaternary structure, monomer. It depends on Mg(2+) as a cofactor.

It carries out the reaction adenosine(37) in tRNA + dimethylallyl diphosphate = N(6)-dimethylallyladenosine(37) in tRNA + diphosphate. Functionally, catalyzes the transfer of a dimethylallyl group onto the adenine at position 37 in tRNAs that read codons beginning with uridine, leading to the formation of N6-(dimethylallyl)adenosine (i(6)A). The protein is tRNA dimethylallyltransferase of Macrococcus caseolyticus (strain JCSC5402) (Macrococcoides caseolyticum).